Here is a 62-residue protein sequence, read N- to C-terminus: Protein YnfQ (62 aa).

It belongs to the YmcF/YnqF peptide family.

The sequence is that of Protein YnfQ from Escherichia coli (strain K12).